The primary structure comprises 254 residues: Aspartate/glutamate leucyltransferase (254 aa).

Belongs to the R-transferase family. Bpt subfamily.

It localises to the cytoplasm. The enzyme catalyses N-terminal L-glutamyl-[protein] + L-leucyl-tRNA(Leu) = N-terminal L-leucyl-L-glutamyl-[protein] + tRNA(Leu) + H(+). It catalyses the reaction N-terminal L-aspartyl-[protein] + L-leucyl-tRNA(Leu) = N-terminal L-leucyl-L-aspartyl-[protein] + tRNA(Leu) + H(+). Functionally, functions in the N-end rule pathway of protein degradation where it conjugates Leu from its aminoacyl-tRNA to the N-termini of proteins containing an N-terminal aspartate or glutamate. This chain is Aspartate/glutamate leucyltransferase, found in Xylella fastidiosa (strain M12).